A 216-amino-acid chain; its full sequence is ATP synthase subunit C lysine N-methyltransferase (216 aa).

An N-acetylmethionine modification is found at Met-1. Positions 1 to 12 (MERGETPEEERQ) are enriched in basic and acidic residues. Residues 1 to 25 (MERGETPEEERQSGCVLPTSPESDS) are disordered. The chain crosses the membrane as a helical span at residues 31-50 (WGFLITGVIGGALVTVYAVT). The segment at 51–85 (TPFIAPALRKVCLPFVPATSRQVENVVKMLQHRRG) is required for mitochondrial location.

Belongs to the ANT/ATPSC lysine N-methyltransferase family.

The protein localises to the mitochondrion membrane. It catalyses the reaction L-lysyl-[protein] + 3 S-adenosyl-L-methionine = N(6),N(6),N(6)-trimethyl-L-lysyl-[protein] + 3 S-adenosyl-L-homocysteine + 3 H(+). In terms of biological role, mitochondrial protein-lysine N-methyltransferase that trimethylates ATP synthase subunit C, ATP5MC1 and ATP5MC2. Trimethylation is required for proper incorporation of the C subunit into the ATP synthase complex and mitochondrial respiration. Promotes chronic pain. Involved in persistent inflammatory and neuropathic pain: methyltransferase activity in the mitochondria of sensory neurons promotes chronic pain via a pathway that depends on the production of reactive oxygen species (ROS) and on the engagement of spinal cord microglia. The polypeptide is ATP synthase subunit C lysine N-methyltransferase (Atpsckmt) (Rattus norvegicus (Rat)).